Reading from the N-terminus, the 481-residue chain is WD repeat-containing protein 55 homolog (481 aa).

The tract at residues 1–116 (MHTHNHFKTP…NRDVETNFDL (116 aa)) is disordered. 3 stretches are compositionally biased toward acidic residues: residues 12-23 (DAEEVDDLDDEM), 31-46 (IEQE…DDGF), and 68-81 (DSFD…DSDD). WD repeat units lie at residues 144-183 (KLED…NKLI), 188-227 (VHSK…LKKL), 231-269 (AHDD…HVFE), 272-311 (QIDD…LYVQ), 314-353 (PYEE…YHCD), and 398-437 (QHNM…DFGD).

It belongs to the WD repeat WDR55 family.

The chain is WD repeat-containing protein 55 homolog from Drosophila ananassae (Fruit fly).